Reading from the N-terminus, the 177-residue chain is ATP synthase subunit delta (177 aa).

This sequence belongs to the ATPase delta chain family. As to quaternary structure, F-type ATPases have 2 components, F(1) - the catalytic core - and F(0) - the membrane proton channel. F(1) has five subunits: alpha(3), beta(3), gamma(1), delta(1), epsilon(1). CF(0) has four main subunits: a(1), b(1), b'(1) and c(10-14). The alpha and beta chains form an alternating ring which encloses part of the gamma chain. F(1) is attached to F(0) by a central stalk formed by the gamma and epsilon chains, while a peripheral stalk is formed by the delta, b and b' chains.

It localises to the cell inner membrane. Its function is as follows. F(1)F(0) ATP synthase produces ATP from ADP in the presence of a proton or sodium gradient. F-type ATPases consist of two structural domains, F(1) containing the extramembraneous catalytic core and F(0) containing the membrane proton channel, linked together by a central stalk and a peripheral stalk. During catalysis, ATP synthesis in the catalytic domain of F(1) is coupled via a rotary mechanism of the central stalk subunits to proton translocation. This protein is part of the stalk that links CF(0) to CF(1). It either transmits conformational changes from CF(0) to CF(1) or is implicated in proton conduction. This Methylibium petroleiphilum (strain ATCC BAA-1232 / LMG 22953 / PM1) protein is ATP synthase subunit delta.